We begin with the raw amino-acid sequence, 316 residues long: CD276 antigen (316 aa).

Positions 1–28 (MLRGWGGPSVGVSMGTALGVLCLCLTGA) are cleaved as a signal peptide. One can recognise an Ig-like V-type domain in the interval 29-139 (VEVQVSEDPV…DSAAVSLQVA (111 aa)). At 29 to 248 (VEVQVSEDPV…GQPMTFPPEA (220 aa)) the chain is on the extracellular side. N-linked (GlcNAc...) asparagine glycans are attached at residues asparagine 104, asparagine 189, and asparagine 215. Residues 145–238 (PSMTLEPNKD…QDAHGSVTIT (94 aa)) form the Ig-like C2-type domain. A disulfide bridge connects residues cysteine 165 and cysteine 220. The helical transmembrane segment at 249–269 (LWVTVGLSVCLVILLVALAFV) threads the bilayer. The Cytoplasmic segment spans residues 270-316 (CWRKIKQSCEEENAGAEDQDGDGEGSKTALRPLKHSENKEDDGQEIA). Over residues 281-292 (ENAGAEDQDGDG) the composition is skewed to acidic residues. Positions 281–316 (ENAGAEDQDGDGEGSKTALRPLKHSENKEDDGQEIA) are disordered.

It belongs to the immunoglobulin superfamily. BTN/MOG family. In terms of assembly, interacts with TREML2 and this interaction enhances T-cell activation.

Its subcellular location is the membrane. Its function is as follows. Modulates T-cell-mediated immune responses and the development of acute and chronic transplant rejection. May play a positive regulatory role in bone formation and has a dual role in the bone-immune interface. Induces antitumor immunity as it activates both acquired and innate immunity leading to natural killer cell and CD8 T-cell dependent killing of tumor cells. The sequence is that of CD276 antigen (Cd276) from Rattus norvegicus (Rat).